Reading from the N-terminus, the 398-residue chain is uncharacterized protein (398 aa).

This sequence belongs to the class-V pyridoxal-phosphate-dependent aminotransferase family. Homodimer.

Functionally, is essential for optimal growth. This is an uncharacterized protein from Mycobacterium tuberculosis (strain CDC 1551 / Oshkosh).